Reading from the N-terminus, the 346-residue chain is Ly6/PLAUR domain-containing protein 3 (346 aa).

Positions 1-30 (MDPARKAGAQAMIWTAGWLLLLLLRGGAQA) are cleaved as a signal peptide. UPAR/Ly6 domains follow at residues 33 to 126 (CYSC…ALDP) and 140 to 222 (CYSC…SRCN). Residues asparagine 118, asparagine 163, asparagine 176, and asparagine 183 are each glycosylated (N-linked (GlcNAc...) asparagine). Residues 233-324 (PRIPPLVRLP…KGGPQQPHNK (92 aa)) are disordered. Over residues 234 to 246 (RIPPLVRLPPPEP) the composition is skewed to pro residues. Residues 247–269 (TTVASTTSVTTSTSAPVRPTSTT) are compositionally biased toward low complexity. Residues 283–295 (GVEHEASRDEEPR) show a composition bias toward basic and acidic residues. A lipid anchor (GPI-anchor amidated cysteine) is attached at cysteine 326. Residues 327 to 346 (VAPTAGLAALLLAVAAGVLL) constitute a propeptide, removed in mature form.

As to quaternary structure, binds laminin-1 and laminin-5. Interacts with LGALS3. Interacts with AGR2 and AGR3. Post-translationally, N-glycosylated and O-glycosylated. As to expression, expressed in placenta, skin and urothelium. Found in suprabasal keratinocytes of chronic wounds. Weak expression is found in esophagus and peripheral blood mononuclear cells. Found in the majority of primary and metastatic transitional cell carcinomas (TCCs) and as well in breast cancer tissues, but not in adjacent normal tissues. High expression is found in the tumor component of some noninvasive superficial lesions and in invasive and metastatic urothelial cancers.

It is found in the cell membrane. Supports cell migration. May be involved in urothelial cell-matrix interactions. May be involved in tumor progression. The polypeptide is Ly6/PLAUR domain-containing protein 3 (LYPD3) (Homo sapiens (Human)).